We begin with the raw amino-acid sequence, 160 residues long: Deoxyuridine 5'-triphosphate nucleotidohydrolase (160 aa).

Residues 72-74 (RSG), asparagine 85, and 89-91 (TID) contribute to the substrate site.

It belongs to the dUTPase family. Mg(2+) is required as a cofactor.

The enzyme catalyses dUTP + H2O = dUMP + diphosphate + H(+). Its pathway is pyrimidine metabolism; dUMP biosynthesis; dUMP from dCTP (dUTP route): step 2/2. In terms of biological role, this enzyme is involved in nucleotide metabolism: it produces dUMP, the immediate precursor of thymidine nucleotides and it decreases the intracellular concentration of dUTP so that uracil cannot be incorporated into DNA. The protein is Deoxyuridine 5'-triphosphate nucleotidohydrolase of Methylocella silvestris (strain DSM 15510 / CIP 108128 / LMG 27833 / NCIMB 13906 / BL2).